The primary structure comprises 147 residues: Allograft inflammatory factor 1 (147 aa).

N-acetylserine is present on Ser2. Residue Lys11 is modified to N6-acetyllysine. Ser39 carries the phosphoserine modification. Positions Ser45 to Pro80 constitute an EF-hand 1 domain. Ca(2+) is bound by residues Asp58, Asn60, Asn62, Asp64, Glu98, Thr100, and Asp105. An EF-hand 2; degenerate domain is found at Lys81–Ser115. The tract at residues Lys127–Pro147 is disordered.

In terms of assembly, homodimer (Potential). Monomer. Interacts with LCP1. In terms of tissue distribution, cardiac allograft, spleen and testis. Expressed by inflammatory cells (macrophages and neutrophils).

It localises to the cytoplasm. The protein localises to the cytoskeleton. The protein resides in the cell projection. It is found in the ruffle membrane. Its subcellular location is the phagocytic cup. Its function is as follows. Actin-binding protein that enhances membrane ruffling and RAC activation. Enhances the actin-bundling activity of LCP1. Binds calcium. Plays a role in RAC signaling and in phagocytosis. May play an role in macrophage activation and function. Promotes the proliferation of vascular smooth muscle cells and of T-lymphocytes. Enhances lymphocyte migration. Plays a role in vascular inflammation. The polypeptide is Allograft inflammatory factor 1 (Aif1) (Rattus norvegicus (Rat)).